A 129-amino-acid chain; its full sequence is uncharacterized protein (129 aa).

Residues 5-25 form a helical membrane-spanning segment; the sequence is IIGLTLAFFVLFLTAVAILFT.

It is found in the membrane. This is an uncharacterized protein from Mycoplasma pneumoniae (strain ATCC 29342 / M129 / Subtype 1) (Mycoplasmoides pneumoniae).